The sequence spans 350 residues: Glyceraldehyde-3-phosphate dehydrogenase (350 aa).

Residues 13–14 (TI) and G118 each bind NAD(+). Position 147–149 (147–149 (SCN)) interacts with D-glyceraldehyde 3-phosphate. Residue C148 is the Nucleophile of the active site. Residue R176 coordinates NAD(+). 202-203 (HG) is a D-glyceraldehyde 3-phosphate binding site. Residue Q309 participates in NAD(+) binding. The interval 327-350 (LEEDPEASMDATDSALGVLNSPPL) is disordered.

Belongs to the glyceraldehyde-3-phosphate dehydrogenase family. Homotetramer.

Its subcellular location is the cytoplasm. It catalyses the reaction D-glyceraldehyde 3-phosphate + phosphate + NADP(+) = (2R)-3-phospho-glyceroyl phosphate + NADPH + H(+). The enzyme catalyses D-glyceraldehyde 3-phosphate + phosphate + NAD(+) = (2R)-3-phospho-glyceroyl phosphate + NADH + H(+). Its pathway is carbohydrate degradation; glycolysis; pyruvate from D-glyceraldehyde 3-phosphate: step 1/5. This Methanopyrus kandleri (strain AV19 / DSM 6324 / JCM 9639 / NBRC 100938) protein is Glyceraldehyde-3-phosphate dehydrogenase.